We begin with the raw amino-acid sequence, 326 residues long: Glutaredoxin 3 (326 aa).

One can recognise a Thioredoxin domain in the interval 1–108 (MANFTDAASL…LTNKVQRLGS (108 aa)). Glutaredoxin domains are found at residues 125–227 (NQRL…VSLE) and 227–326 (ENRL…KGEN). [2Fe-2S] cluster contacts are provided by C150 and C252.

In terms of assembly, homodimer; the homodimer is independent of 2Fe-2S clusters. Heterotrimer; forms a heterotrimeric complex composed by two bola2 molecules and one glrx3 molecule; linked by [2Fe-2S] clusters.

Its subcellular location is the cytoplasm. The protein localises to the cytosol. In terms of biological role, together with bola2, acts as a cytosolic iron-sulfur (Fe-S) cluster assembly factor that facilitates [2Fe-2S] cluster insertion into a subset of cytosolic proteins. Required for hemoglobin maturation. Does not possess any thyoredoxin activity since it lacks the conserved motif that is essential for catalytic activity. The sequence is that of Glutaredoxin 3 (glrx3) from Danio rerio (Zebrafish).